A 214-amino-acid chain; its full sequence is MPMSAIDKEALETWVPRTRVGKMVVEGKITSLKEIFDRNLPLLEPEIVDYLLPDLKYERLDVGIVQKVTDAGRRSRFRVVVVVGNEDGFVGVGSGKARQYLVALRKALRNAKLNITPVRRGCGSWECRCGEPHSIPFTVQGKSGSVVVVLKPAPKGTGLVAGDTAKAVLRMAGIKDVWTETFGKTKTTLNFAKAVVNALRNTYKFVAPVDWLKA.

The S5 DRBM domain occupies 55–118 (LKYERLDVGI…RNAKLNITPV (64 aa)).

Belongs to the universal ribosomal protein uS5 family. In terms of assembly, part of the 30S ribosomal subunit. Contacts protein S4.

With S4 and S12 plays an important role in translational accuracy. In Staphylothermus marinus (strain ATCC 43588 / DSM 3639 / JCM 9404 / F1), this protein is Small ribosomal subunit protein uS5.